Reading from the N-terminus, the 137-residue chain is Lysozyme (137 aa).

Positions 1 to 20 are cleaved as a signal peptide; the sequence is MSAVLVLALVLLSLTCVTDA. One can recognise an I-type lysozyme domain in the interval 21-134; that stretch reads ISDACLTCIC…WNAVKNQGCS (114 aa). 6 cysteine pairs are disulfide-bonded: Cys25–Cys102, Cys30–Cys37, Cys42–Cys51, Cys64–Cys84, Cys74–Cys80, and Cys98–Cys116. Catalysis depends on Glu33, which acts as the Proton donor. Catalysis depends on Asp45, which acts as the Nucleophile. 57 to 63 lines the substrate pocket; it reads KKSYWID. Residues Tyr88 and 109–111 each bind substrate; that span reads HNG.

It belongs to the glycosyl hydrolase 22 family. Type-I lysozyme subfamily.

It localises to the secreted. It carries out the reaction Hydrolysis of (1-&gt;4)-beta-linkages between N-acetylmuramic acid and N-acetyl-D-glucosamine residues in a peptidoglycan and between N-acetyl-D-glucosamine residues in chitodextrins.. Functionally, has bacteriolytic activity. May play a role in digestion and in the host defense mechanisms against invading microbes. This is Lysozyme (lysoz) from Ostrea edulis (Native oyster).